A 184-amino-acid chain; its full sequence is Ribosome maturation factor RimM (184 aa).

Positions Thr-112–Gln-184 constitute a PRC barrel domain.

It belongs to the RimM family. In terms of assembly, binds ribosomal protein uS19.

It localises to the cytoplasm. Its function is as follows. An accessory protein needed during the final step in the assembly of 30S ribosomal subunit, possibly for assembly of the head region. Essential for efficient processing of 16S rRNA. May be needed both before and after RbfA during the maturation of 16S rRNA. It has affinity for free ribosomal 30S subunits but not for 70S ribosomes. This is Ribosome maturation factor RimM from Polynucleobacter necessarius subsp. necessarius (strain STIR1).